The following is a 389-amino-acid chain: viridiflorene synthase Agr2 (389 aa).

The first 15 residues, methionine 1–alanine 15, serve as a signal peptide directing secretion. Mg(2+) contacts are provided by aspartate 128, asparagine 263, serine 267, and glutamate 271. The short motif at aspartate 128–aspartate 132 is the DDXXD motif element. Positions 360 and 361 each coordinate (2E,6E)-farnesyl diphosphate.

This sequence belongs to the terpene synthase family. Mg(2+) is required as a cofactor.

The enzyme catalyses (2E,6E)-farnesyl diphosphate = viridiflorene + diphosphate. In terms of biological role, terpene cyclase that catalyzes the cyclization of farnesyl diphosphate (FPP) to viridiflorene. This is viridiflorene synthase Agr2 from Cyclocybe aegerita (Black poplar mushroom).